The primary structure comprises 276 residues: MAD2L1-binding protein (276 aa).

Residues 1–10 (MAASGEEDMS) are compositionally biased toward acidic residues. Positions 1–30 (MAASGEEDMSELSPAAAPNLDWYEKPEETH) are disordered. The segment at 49-81 (PAEPFCPRDLVPVVFPGPVSQEDCCQFTCELLK) is interaction with MAD2L1.

This sequence belongs to the MAD2L1BP family. Interacts with MAD2L1.

It localises to the nucleus. It is found in the nucleoplasm. Its subcellular location is the cytoplasm. The protein resides in the cytoskeleton. The protein localises to the spindle. In terms of biological role, may function to silence the spindle checkpoint and allow mitosis to proceed through anaphase by binding MAD2L1 after it has become dissociated from the MAD2L1-CDC20 complex. The chain is MAD2L1-binding protein (Mad2l1bp) from Mus musculus (Mouse).